Here is a 532-residue protein sequence, read N- to C-terminus: Protein DETOXIFICATION 48 (532 aa).

12 helical membrane passes run 65–85, 95–115, 136–156, 174–194, 211–231, 235–255, 279–301, 322–342, 363–383, 397–417, 437–457, and 464–484; these read ISGP…ISML, LAGG…VISG, LGLT…PISF, ISSV…LLSL, VTYS…LLVV, MGVA…VVLL, GWSA…WWWY, GILI…SLGV, IISL…AVLV, ILQL…GNCP, INLG…GFVF, and LWFG…CALL. Positions 496–532 are disordered; the sequence is EELTSQTPGKSPPLLPIASSKSRSTSGTEDMMRTMLV. Over residues 514–523 the composition is skewed to polar residues; that stretch reads SSKSRSTSGT.

Belongs to the multi antimicrobial extrusion (MATE) (TC 2.A.66.1) family. Highly expressed in shoot apices relative to leaves. At vegetative stages, highly expressed at the stipules. At reproductive stages, most highly expressed in the mature pollen. Also expressed in the tips of sepals.

It localises to the golgi apparatus membrane. It is found in the late endosome membrane. Functionally, functions as a multidrug and toxin extrusion transporter. Contributes to iron homeostasis during stress responses and senescence. Could be involved in specifying the lateral organ initiation rate. May act as a negative regulator of hypocotyl cell elongation in the light. In Arabidopsis thaliana (Mouse-ear cress), this protein is Protein DETOXIFICATION 48.